We begin with the raw amino-acid sequence, 634 residues long: Sodium-dependent multivitamin transporter (634 aa).

Transmembrane regions (helical) follow at residues 23-43 (FSVV…VIGL), 65-85 (MGCL…VAIL), 100-120 (FLGC…IPVF), 142-162 (ICGT…ALYA), 175-195 (LWLS…LGGL), 207-227 (LVMF…VGGL), 255-275 (FWTL…VNQA), 295-315 (AVFP…LVMF), 350-370 (LPGL…SSAF), 403-423 (FAYG…GSVL), 427-447 (LSIF…GLFF), and 455-475 (AIVG…GSIV). N-linked (GlcNAc...) asparagine glycosylation is found at Asn488 and Asn497. A helical membrane pass occupies residues 526–546 (LWYSAHNSTTVIVVGLIVSLL).

The protein belongs to the sodium:solute symporter (SSF) (TC 2.A.21) family. As to quaternary structure, interacts with PDZD11. Expressed in the intestinal mucosa, liver and kidney (at protein level). Expressed in the colon.

It is found in the cell membrane. It localises to the apical cell membrane. The catalysed reaction is biotin(out) + 2 Na(+)(out) = biotin(in) + 2 Na(+)(in). It carries out the reaction (R)-pantothenate(out) + 2 Na(+)(out) = (R)-pantothenate(in) + 2 Na(+)(in). It catalyses the reaction (R)-lipoate(out) + 2 Na(+)(out) = (R)-lipoate(in) + 2 Na(+)(in). The enzyme catalyses iodide(out) + 2 Na(+)(out) = iodide(in) + 2 Na(+)(in). Sodium-dependent multivitamin transporter that mediates the electrogenic transport of pantothenate, biotin, lipoate and iodide. Functions as a Na(+)-coupled substrate symporter where the stoichiometry of Na(+):substrate is 2:1, creating an electrochemical Na(+) gradient used as driving force for substrate uptake. Required for biotin and pantothenate uptake in the intestine across the brush border membrane. Plays a role in the maintenance of intestinal mucosa integrity, by providing the gut mucosa with biotin. Contributes to the luminal uptake of biotin and pantothenate into the brain across the blood-brain barrier. In Mus musculus (Mouse), this protein is Sodium-dependent multivitamin transporter.